We begin with the raw amino-acid sequence, 492 residues long: GTPase Obg (492 aa).

In terms of domain architecture, Obg spans 2-159 (PRFVDRVVIH…RELTLELKTV (158 aa)). Residues 160–340 (ADVGLIGFPS…LIFGLWQMIS (181 aa)) form the OBG-type G domain. GTP contacts are provided by residues 166–173 (GFPSAGKS), 191–195 (FTTLV), 212–215 (DVPG), 292–295 (NKID), and 321–323 (STV). Residues Ser-173 and Thr-193 each coordinate Mg(2+). The region spanning 358–438 (PVPVDDSGFR…IGDMTFDWEP (81 aa)) is the OCT domain. The segment at 449–492 (SGRGTDARLERTERVGAAERKAARRQRRTGDDAERGTTERGENT) is disordered. Composition is skewed to basic and acidic residues over residues 453–469 (TDARLERTERVGAAERK) and 476–492 (RTGDDAERGTTERGENT).

The protein belongs to the TRAFAC class OBG-HflX-like GTPase superfamily. OBG GTPase family. Monomer. Requires Mg(2+) as cofactor.

The protein localises to the cytoplasm. Functionally, an essential GTPase which binds GTP, GDP and possibly (p)ppGpp with moderate affinity, with high nucleotide exchange rates and a fairly low GTP hydrolysis rate. Plays a role in control of the cell cycle, stress response, ribosome biogenesis and in those bacteria that undergo differentiation, in morphogenesis control. The sequence is that of GTPase Obg from Mycobacterium avium (strain 104).